We begin with the raw amino-acid sequence, 185 residues long: Elongation factor P (185 aa).

It belongs to the elongation factor P family.

The protein resides in the cytoplasm. Its pathway is protein biosynthesis; polypeptide chain elongation. Its function is as follows. Involved in peptide bond synthesis. Stimulates efficient translation and peptide-bond synthesis on native or reconstituted 70S ribosomes in vitro. Probably functions indirectly by altering the affinity of the ribosome for aminoacyl-tRNA, thus increasing their reactivity as acceptors for peptidyl transferase. This chain is Elongation factor P, found in Tropheryma whipplei (strain TW08/27) (Whipple's bacillus).